Consider the following 157-residue polypeptide: SsrA-binding protein (157 aa).

The segment at His-133–Arg-157 is disordered.

Belongs to the SmpB family.

Its subcellular location is the cytoplasm. Its function is as follows. Required for rescue of stalled ribosomes mediated by trans-translation. Binds to transfer-messenger RNA (tmRNA), required for stable association of tmRNA with ribosomes. tmRNA and SmpB together mimic tRNA shape, replacing the anticodon stem-loop with SmpB. tmRNA is encoded by the ssrA gene; the 2 termini fold to resemble tRNA(Ala) and it encodes a 'tag peptide', a short internal open reading frame. During trans-translation Ala-aminoacylated tmRNA acts like a tRNA, entering the A-site of stalled ribosomes, displacing the stalled mRNA. The ribosome then switches to translate the ORF on the tmRNA; the nascent peptide is terminated with the 'tag peptide' encoded by the tmRNA and targeted for degradation. The ribosome is freed to recommence translation, which seems to be the essential function of trans-translation. The protein is SsrA-binding protein of Verminephrobacter eiseniae (strain EF01-2).